The following is a 61-amino-acid chain: Large ribosomal subunit protein eL37 (61 aa).

Residues Cys-19, Cys-22, Cys-34, and Cys-37 each contribute to the Zn(2+) site. The C4-type zinc-finger motif lies at 19-37 (CRRCGRNAYNVSKHYCAAC).

It belongs to the eukaryotic ribosomal protein eL37 family. Zn(2+) is required as a cofactor.

Its function is as follows. Binds to the 23S rRNA. This Saccharolobus islandicus (strain L.S.2.15 / Lassen #1) (Sulfolobus islandicus) protein is Large ribosomal subunit protein eL37.